A 157-amino-acid chain; its full sequence is Small ribosomal subunit protein uS7 (157 aa).

It belongs to the universal ribosomal protein uS7 family. As to quaternary structure, part of the 30S ribosomal subunit. Contacts proteins S9 and S11.

Its function is as follows. One of the primary rRNA binding proteins, it binds directly to 16S rRNA where it nucleates assembly of the head domain of the 30S subunit. Is located at the subunit interface close to the decoding center, probably blocks exit of the E-site tRNA. The chain is Small ribosomal subunit protein uS7 from Akkermansia muciniphila (strain ATCC BAA-835 / DSM 22959 / JCM 33894 / BCRC 81048 / CCUG 64013 / CIP 107961 / Muc).